A 480-amino-acid chain; its full sequence is Glutarate-semialdehyde dehydrogenase (480 aa).

Residues 156–157 (WN), 180–183 (KPAS), and 233–234 (GS) contribute to the NADP(+) site. The active-site Proton acceptor is the Glu-255. An NADP(+)-binding site is contributed by Leu-256. Cys-289 serves as the catalytic Nucleophile. Glu-384 provides a ligand contact to NADP(+).

This sequence belongs to the aldehyde dehydrogenase family.

The enzyme catalyses 5-oxopentanoate + NADP(+) + H2O = glutarate + NADPH + 2 H(+). It functions in the pathway amino-acid degradation. Catalyzes the conversion of 5-oxopentanoate (glutarate semialdehyde) to glutarate. Involved in L-lysine degradation. The polypeptide is Glutarate-semialdehyde dehydrogenase (Pseudomonas putida (strain ATCC 47054 / DSM 6125 / CFBP 8728 / NCIMB 11950 / KT2440)).